The chain runs to 727 residues: 1,4-alpha-glucan branching enzyme GlgB (727 aa).

The active-site Nucleophile is Asp405. The Proton donor role is filled by Glu458.

It belongs to the glycosyl hydrolase 13 family. GlgB subfamily. Monomer.

It catalyses the reaction Transfers a segment of a (1-&gt;4)-alpha-D-glucan chain to a primary hydroxy group in a similar glucan chain.. It participates in glycan biosynthesis; glycogen biosynthesis. Functionally, catalyzes the formation of the alpha-1,6-glucosidic linkages in glycogen by scission of a 1,4-alpha-linked oligosaccharide from growing alpha-1,4-glucan chains and the subsequent attachment of the oligosaccharide to the alpha-1,6 position. In Yersinia pestis bv. Antiqua (strain Antiqua), this protein is 1,4-alpha-glucan branching enzyme GlgB.